Reading from the N-terminus, the 110-residue chain is Small ribosomal subunit protein bS16 (110 aa).

Residues 82 to 103 (VKKREARNNPEKAVPRKERKAQ) show a composition bias toward basic and acidic residues. The interval 82–110 (VKKREARNNPEKAVPRKERKAQAEAAAKG) is disordered.

The protein belongs to the bacterial ribosomal protein bS16 family.

The sequence is that of Small ribosomal subunit protein bS16 from Bradyrhizobium sp. (strain ORS 278).